Reading from the N-terminus, the 359-residue chain is tRNA-specific 2-thiouridylase MnmA (359 aa).

ATP-binding positions include 6-13 and L32; that span reads AMSGGVDS. The active-site Nucleophile is C101. An intrachain disulfide couples C101 to C193. G125 is a binding site for ATP. Positions 143-145 are interaction with tRNA; sequence KDQ. The Cysteine persulfide intermediate role is filled by C193.

It belongs to the MnmA/TRMU family.

It is found in the cytoplasm. It catalyses the reaction S-sulfanyl-L-cysteinyl-[protein] + uridine(34) in tRNA + AH2 + ATP = 2-thiouridine(34) in tRNA + L-cysteinyl-[protein] + A + AMP + diphosphate + H(+). Functionally, catalyzes the 2-thiolation of uridine at the wobble position (U34) of tRNA, leading to the formation of s(2)U34. This Mycobacterium sp. (strain JLS) protein is tRNA-specific 2-thiouridylase MnmA.